We begin with the raw amino-acid sequence, 58 residues long: uncharacterized protein (58 aa).

The stretch at 3–52 forms a coiled coil; it reads KVILEHLQRIEKQLEILNSKIENFLGFEELSEEELKELDEIEAKMEKGEK.

This is an uncharacterized protein from Archaeoglobus fulgidus (strain ATCC 49558 / DSM 4304 / JCM 9628 / NBRC 100126 / VC-16).